The sequence spans 70 residues: Gas vesicle protein A (70 aa).

Belongs to the gas vesicle GvpA family. The gas vesicle shell is 2 nm thick and consists of a single layer of this protein. It forms helical ribs nearly perpendicular to the long axis of the vesicle.

Its subcellular location is the gas vesicle shell. Gas vesicles are hollow, gas filled proteinaceous nanostructures found in some microorganisms. During planktonic growth they allow positioning of the organism at a favorable depth for light or nutrient acquisition. GvpA forms the protein shell. The sequence is that of Gas vesicle protein A from Cereibacter sphaeroides (strain ATCC 17023 / DSM 158 / JCM 6121 / CCUG 31486 / LMG 2827 / NBRC 12203 / NCIMB 8253 / ATH 2.4.1.) (Rhodobacter sphaeroides).